Here is a 507-residue protein sequence, read N- to C-terminus: uncharacterized protein (507 aa).

Helical transmembrane passes span Trp46–Tyr66, Ala83–Ala103, Ala112–Leu132, Phe141–Leu161, Ile181–Val201, Val207–Phe227, Ile263–Met283, Val299–Val319, Thr328–Leu348, Val354–Gly374, Thr389–Met409, and Met442–Phe462. A compositionally biased stretch (basic and acidic residues) spans Ala477–Ile493. The segment at Ala477 to Lys507 is disordered.

It localises to the membrane. This is an uncharacterized protein from Caenorhabditis elegans.